Consider the following 234-residue polypeptide: MEFLKLSEGKTKEVYAYDDSHVLLKFKDSITAGDGARKDILEGKGILNAQTSAFLFRLLESKGIETHYIGMFDERTMIAKKLKMIPVEVVLRNIATGSIVKRLPIKEGEVFEPPIIEFFLKDDERHDPMLNYYHMEYLKLMTRKEAEKIEEIMLKVNEILYPFFRSKKLLLYDFKLEFGRVNDKLIIGDELTLDSMRIREEGSGRILDKDLYRKGADLETVKKAYEEFFKRISE.

Belongs to the SAICAR synthetase family.

It carries out the reaction 5-amino-1-(5-phospho-D-ribosyl)imidazole-4-carboxylate + L-aspartate + ATP = (2S)-2-[5-amino-1-(5-phospho-beta-D-ribosyl)imidazole-4-carboxamido]succinate + ADP + phosphate + 2 H(+). It participates in purine metabolism; IMP biosynthesis via de novo pathway; 5-amino-1-(5-phospho-D-ribosyl)imidazole-4-carboxamide from 5-amino-1-(5-phospho-D-ribosyl)imidazole-4-carboxylate: step 1/2. The protein is Phosphoribosylaminoimidazole-succinocarboxamide synthase of Sulfurisphaera tokodaii (strain DSM 16993 / JCM 10545 / NBRC 100140 / 7) (Sulfolobus tokodaii).